Reading from the N-terminus, the 485-residue chain is ATP synthase subunit beta, cyanelle (485 aa).

162 to 169 (GGAGVGKT) is an ATP binding site.

Belongs to the ATPase alpha/beta chains family. As to quaternary structure, F-type ATPases have 2 components, CF(1) - the catalytic core - and CF(0) - the membrane proton channel. CF(1) has five subunits: alpha(3), beta(3), gamma(1), delta(1), epsilon(1). CF(0) has four main subunits: a(1), b(1), b'(1) and c(9-12).

It localises to the plastid. The protein resides in the cyanelle thylakoid membrane. It carries out the reaction ATP + H2O + 4 H(+)(in) = ADP + phosphate + 5 H(+)(out). Its function is as follows. Produces ATP from ADP in the presence of a proton gradient across the membrane. The catalytic sites are hosted primarily by the beta subunits. The polypeptide is ATP synthase subunit beta, cyanelle (Cyanophora paradoxa).